We begin with the raw amino-acid sequence, 201 residues long: dTTP/UTP pyrophosphatase (201 aa).

Aspartate 80 (proton acceptor) is an active-site residue.

The protein belongs to the Maf family. YhdE subfamily. Requires a divalent metal cation as cofactor.

It localises to the cytoplasm. The enzyme catalyses dTTP + H2O = dTMP + diphosphate + H(+). It carries out the reaction UTP + H2O = UMP + diphosphate + H(+). Nucleoside triphosphate pyrophosphatase that hydrolyzes dTTP and UTP. May have a dual role in cell division arrest and in preventing the incorporation of modified nucleotides into cellular nucleic acids. This chain is dTTP/UTP pyrophosphatase, found in Novosphingobium aromaticivorans (strain ATCC 700278 / DSM 12444 / CCUG 56034 / CIP 105152 / NBRC 16084 / F199).